We begin with the raw amino-acid sequence, 151 residues long: Cell division protein SepF (151 aa).

This sequence belongs to the SepF family. In terms of assembly, homodimer. Interacts with FtsZ.

Its subcellular location is the cytoplasm. Cell division protein that is part of the divisome complex and is recruited early to the Z-ring. Probably stimulates Z-ring formation, perhaps through the cross-linking of FtsZ protofilaments. Its function overlaps with FtsA. In Desulfitobacterium hafniense (strain Y51), this protein is Cell division protein SepF.